The primary structure comprises 191 residues: Large ribosomal subunit protein uL22 (191 aa).

The span at 159 to 168 (VPKGEDDTAQ) shows a compositional bias: basic and acidic residues. Residues 159-191 (VPKGEDDTAQKKKVSQKKLKKQKLKAALSGGAD) form a disordered region. Basic residues predominate over residues 169–182 (KKKVSQKKLKKQKL).

This sequence belongs to the universal ribosomal protein uL22 family.

This chain is Large ribosomal subunit protein uL22 (RPL17), found in Suberites domuncula (Sponge).